Consider the following 137-residue polypeptide: Endoribonuclease YbeY (137 aa).

H105, H109, and D115 together coordinate Zn(2+).

This sequence belongs to the endoribonuclease YbeY family. It depends on Zn(2+) as a cofactor.

It is found in the cytoplasm. In terms of biological role, single strand-specific metallo-endoribonuclease involved in late-stage 70S ribosome quality control and in maturation of the 3' terminus of the 16S rRNA. The polypeptide is Endoribonuclease YbeY (Chlorobium luteolum (strain DSM 273 / BCRC 81028 / 2530) (Pelodictyon luteolum)).